We begin with the raw amino-acid sequence, 147 residues long: UPF0306 protein KPN78578_35330 (147 aa).

This sequence belongs to the UPF0306 family.

In Klebsiella pneumoniae subsp. pneumoniae (strain ATCC 700721 / MGH 78578), this protein is UPF0306 protein KPN78578_35330.